Here is a 127-residue protein sequence, read N- to C-terminus: Fluoride-specific ion channel FluC (127 aa).

4 consecutive transmembrane segments (helical) span residues L2–I22, L35–F55, L68–V88, and L104–I124. 2 residues coordinate Na(+): G75 and T78.

The protein belongs to the fluoride channel Fluc/FEX (TC 1.A.43) family.

Its subcellular location is the cell inner membrane. The enzyme catalyses fluoride(in) = fluoride(out). Its activity is regulated as follows. Na(+) is not transported, but it plays an essential structural role and its presence is essential for fluoride channel function. In terms of biological role, fluoride-specific ion channel. Important for reducing fluoride concentration in the cell, thus reducing its toxicity. This chain is Fluoride-specific ion channel FluC, found in Serratia proteamaculans (strain 568).